Consider the following 337-residue polypeptide: MSEIEEEEEEGSASAITGSRSFDLPDELLQVLPSDPFEQLDVARKITSIALSTRVSALESESSDLRELLAEKEKEFEELQSHVESLEASLSDAFHKLSLADGEKENLIRENASLSNTVKRLQRDVSKLEGFRKTLMMSLQDDDQNAGTTQIIAKPTPNDDDTPFQPSRHSSIQSQQASEAIEPAATDNENDAPKPSLSASLPLVSQTTTPRLTPPGSPPILSASGTPKTTSRPISPRRHSVSFATTRGMFDDTRSSISISEPGSQTARTRVDGKEFFRQVRSRLSYEQFGAFLGNVKDLNAHKQTREETLRKAEEIFGGDNRDLYVIFEGLITRNAH.

Residues 1–11 (MSEIEEEEEEG) are compositionally biased toward acidic residues. Positions 1–20 (MSEIEEEEEEGSASAITGSR) are disordered. The residue at position 2 (Ser2) is an N-acetylserine. Positions 50-130 (ALSTRVSALE…LQRDVSKLEG (81 aa)) form a coiled coil. Residues 139–242 (LQDDDQNAGT…PISPRRHSVS (104 aa)) are disordered. Low complexity predominate over residues 170 to 182 (SSIQSQQASEAIE). Over residues 197-211 (LSASLPLVSQTTTPR) the composition is skewed to polar residues. Thr213 is subject to Phosphothreonine. Residue Ser217 is modified to Phosphoserine. Positions 223–233 (ASGTPKTTSRP) are enriched in polar residues. Thr226 carries the post-translational modification Phosphothreonine. Ser235 is modified (phosphoserine).

This is an uncharacterized protein from Arabidopsis thaliana (Mouse-ear cress).